The following is a 597-amino-acid chain: Arginine--tRNA ligase (597 aa).

Positions 138-148 match the 'HIGH' region motif; it reads ANPTGPMHVGH.

Belongs to the class-I aminoacyl-tRNA synthetase family. Monomer.

The protein localises to the cytoplasm. The catalysed reaction is tRNA(Arg) + L-arginine + ATP = L-arginyl-tRNA(Arg) + AMP + diphosphate. The sequence is that of Arginine--tRNA ligase from Nitrobacter winogradskyi (strain ATCC 25391 / DSM 10237 / CIP 104748 / NCIMB 11846 / Nb-255).